A 294-amino-acid chain; its full sequence is Phosphoribosylaminoimidazole-succinocarboxamide synthase (294 aa).

The protein belongs to the SAICAR synthetase family.

The enzyme catalyses 5-amino-1-(5-phospho-D-ribosyl)imidazole-4-carboxylate + L-aspartate + ATP = (2S)-2-[5-amino-1-(5-phospho-beta-D-ribosyl)imidazole-4-carboxamido]succinate + ADP + phosphate + 2 H(+). It functions in the pathway purine metabolism; IMP biosynthesis via de novo pathway; 5-amino-1-(5-phospho-D-ribosyl)imidazole-4-carboxamide from 5-amino-1-(5-phospho-D-ribosyl)imidazole-4-carboxylate: step 1/2. The chain is Phosphoribosylaminoimidazole-succinocarboxamide synthase from Rhodococcus opacus (strain B4).